Consider the following 190-residue polypeptide: dCTP deaminase (190 aa).

113 to 118 (KSTYAR) lines the dCTP pocket. Catalysis depends on Glu139, which acts as the Proton donor/acceptor. The dCTP site is built by Gln158, Tyr172, Lys181, and Gln182.

This sequence belongs to the dCTP deaminase family. Homotrimer.

It carries out the reaction dCTP + H2O + H(+) = dUTP + NH4(+). It functions in the pathway pyrimidine metabolism; dUMP biosynthesis; dUMP from dCTP (dUTP route): step 1/2. Functionally, catalyzes the deamination of dCTP to dUTP. This is dCTP deaminase from Chlamydia caviae (strain ATCC VR-813 / DSM 19441 / 03DC25 / GPIC) (Chlamydophila caviae).